Consider the following 189-residue polypeptide: Transcription factor FapR (189 aa).

It belongs to the FapR family.

Functionally, transcriptional factor involved in regulation of membrane lipid biosynthesis by repressing genes involved in fatty acid and phospholipid metabolism. This Exiguobacterium sp. (strain ATCC BAA-1283 / AT1b) protein is Transcription factor FapR.